Consider the following 284-residue polypeptide: tRNA uridine(34) hydroxylase (284 aa).

Residues 132-226 (TGRPVVMLDT…YFEEVGGAHY (95 aa)) enclose the Rhodanese domain. Cys186 functions as the Cysteine persulfide intermediate in the catalytic mechanism.

Belongs to the TrhO family.

The enzyme catalyses uridine(34) in tRNA + AH2 + O2 = 5-hydroxyuridine(34) in tRNA + A + H2O. Catalyzes oxygen-dependent 5-hydroxyuridine (ho5U) modification at position 34 in tRNAs. This is tRNA uridine(34) hydroxylase from Burkholderia cenocepacia (strain ATCC BAA-245 / DSM 16553 / LMG 16656 / NCTC 13227 / J2315 / CF5610) (Burkholderia cepacia (strain J2315)).